The following is a 297-amino-acid chain: HTH-type transcriptional regulator ArgP (297 aa).

One can recognise an HTH lysR-type domain in the interval 2 to 58; sequence FDYKLLSALAAVVEQAGFERAAQVLGLSQSAISQRIKLLEARVGQPVLVRGTPPSPT. Positions 19–38 form a DNA-binding region, H-T-H motif; it reads FERAAQVLGLSQSAISQRIK.

It belongs to the LysR transcriptional regulatory family. In terms of assembly, homodimer.

In terms of biological role, controls the transcription of genes involved in arginine and lysine metabolism. The chain is HTH-type transcriptional regulator ArgP from Pseudomonas fluorescens (strain Pf0-1).